The following is a 346-amino-acid chain: Putative D-threonate 4-phosphate dehydrogenase (346 aa).

2 residues coordinate substrate: His141 and Thr142. A divalent metal cation contacts are provided by His171, His215, and His270. Substrate is bound by residues Lys278 and Arg296.

It belongs to the PdxA family. PdxA2 subfamily. Homodimer. A divalent metal cation is required as a cofactor.

The enzyme catalyses 4-O-phospho-D-threonate + NAD(+) = dihydroxyacetone phosphate + CO2 + NADH. Its function is as follows. Catalyzes the NAD-dependent oxidation and subsequent decarboxylation of D-threonate 4-phosphate to produce dihydroxyacetone phosphate (DHAP). The polypeptide is Putative D-threonate 4-phosphate dehydrogenase (Cutibacterium acnes (strain DSM 16379 / KPA171202) (Propionibacterium acnes)).